The sequence spans 184 residues: Large ribosomal subunit protein uL5 (184 aa).

This sequence belongs to the universal ribosomal protein uL5 family. In terms of assembly, part of the 50S ribosomal subunit; part of the 5S rRNA/L5/L18/L25 subcomplex. Contacts the 5S rRNA and the P site tRNA. Forms a bridge to the 30S subunit in the 70S ribosome.

Functionally, this is one of the proteins that bind and probably mediate the attachment of the 5S RNA into the large ribosomal subunit, where it forms part of the central protuberance. In the 70S ribosome it contacts protein S13 of the 30S subunit (bridge B1b), connecting the 2 subunits; this bridge is implicated in subunit movement. Contacts the P site tRNA; the 5S rRNA and some of its associated proteins might help stabilize positioning of ribosome-bound tRNAs. The chain is Large ribosomal subunit protein uL5 from Thermotoga sp. (strain RQ2).